Consider the following 396-residue polypeptide: S-adenosylmethionine synthase (396 aa).

Position 16 (H16) interacts with ATP. D18 is a Mg(2+) binding site. E44 lines the K(+) pocket. The L-methionine site is built by E57 and Q100. Positions 100–110 are flexible loop; that stretch reads QSVDIAQGVDR. Residues 165–167, D240, 246–247, A263, and K267 contribute to the ATP site; these read DAK and RK. Residue D240 participates in L-methionine binding. Position 271 (K271) interacts with L-methionine.

This sequence belongs to the AdoMet synthase family. As to quaternary structure, homotetramer; dimer of dimers. Mg(2+) is required as a cofactor. It depends on K(+) as a cofactor.

The protein resides in the cytoplasm. It carries out the reaction L-methionine + ATP + H2O = S-adenosyl-L-methionine + phosphate + diphosphate. It participates in amino-acid biosynthesis; S-adenosyl-L-methionine biosynthesis; S-adenosyl-L-methionine from L-methionine: step 1/1. Functionally, catalyzes the formation of S-adenosylmethionine (AdoMet) from methionine and ATP. The overall synthetic reaction is composed of two sequential steps, AdoMet formation and the subsequent tripolyphosphate hydrolysis which occurs prior to release of AdoMet from the enzyme. In Stutzerimonas stutzeri (strain A1501) (Pseudomonas stutzeri), this protein is S-adenosylmethionine synthase.